We begin with the raw amino-acid sequence, 708 residues long: Retrotransposon-derived protein PEG10 (708 aa).

The stretch at 1-50 (MTERRRDELSEEINNLREKVMKQSEENNNLQSQVQKLTEENTTLREQVEP) forms a coiled coil. The disordered stretch occupies residues 21 to 74 (MKQSEENNNLQSQVQKLTEENTTLREQVEPTPEDEDDDIELRGAAAAAAPPPPI). A compositionally biased stretch (polar residues) spans 26-36 (ENNNLQSQVQK). A compositionally biased stretch (basic and acidic residues) spans 37-48 (LTEENTTLREQV). The interval 76–275 (EECPEDLPEK…HQVDPTEPVG (200 aa)) is necessary for interaction with ACVRL1. Residues 293–310 (NLCLYCGTGGHYADNCPA) form a CCHC-type zinc finger. Residues 310 to 344 (AKASKSSPAGKLPGPAVEGPSATGPEIIRSPQDDA) form a disordered region. Glycyl lysine isopeptide (Lys-Gly) (interchain with G-Cter in ubiquitin) cross-links involve residues K311 and K314. Residues S316 and L321 each carry the phosphoserine modification. An omega-N-methylarginine mark is found at R507, R598, and R611. The segment at 683–708 (PVPQYPPPQPPPPPPPPPPPPSYSTL) is disordered.

As to quaternary structure, homooligomer; homooligomerizes into virion-like capsids. Interacts with ACVRL1. Interacts with SIAH1 and SIAH2. In terms of processing, undergoes proteolytic cleavage. In terms of tissue distribution, expressed in the cytotrophoblast layer but not in the overlying syncytiotrophoblast of the placenta. Expressed in prostate and breast carcinomas but not in normal breast and prostate epithelial cells. Expressed in the Hep-G2 cell line (at protein level). Expressed in brain, liver, spleen, kidney, thymus, lung, ovary, testis, reactive lymph node, skeletal muscle, adipose tissue and placenta. Expressed in pancreatic and hepatocellular carcinomas (HCC).

It is found in the extracellular vesicle membrane. The protein resides in the cytoplasm. Its subcellular location is the nucleus. Functionally, retrotransposon-derived protein that binds its own mRNA and self-assembles into virion-like capsids. Forms virion-like extracellular vesicles that encapsulate their own mRNA and are released from cells, enabling intercellular transfer of PEG10 mRNA. Binds its own mRNA in the 5'-UTR region, in the region near the boundary between the nucleocapsid (NC) and protease (PRO) coding sequences and in the beginning of the 3'-UTR region. Involved in placenta formation: required for trophoblast stem cells differentiation. Involved at the immediate early stage of adipocyte differentiation. Overexpressed in many cancers and enhances tumor progression: promotes cell proliferation by driving cell cycle progression from G0/G1. Enhances cancer progression by inhibiting the TGF-beta signaling, possibly via interaction with the TGF-beta receptor ACVRL1. May bind to the 5'-GCCTGTCTTT-3' DNA sequence of the MB1 domain in the myelin basic protein (MBP) promoter; additional evidences are however required to confirm this result. The chain is Retrotransposon-derived protein PEG10 from Homo sapiens (Human).